The sequence spans 568 residues: uncharacterized protein (568 aa).

The span at 334–346 shows a compositional bias: basic and acidic residues; sequence DDNEEKNNDRPKI. Disordered regions lie at residues 334–382 and 436–479; these read DDNE…NDQN and QVEE…SCKN. A compositionally biased stretch (low complexity) spans 458–477; it reads KIASSASKNDNSNNKNSKSC.

This sequence to yeast YJL043w.

This is an uncharacterized protein from Saccharomyces cerevisiae (strain ATCC 204508 / S288c) (Baker's yeast).